Consider the following 359-residue polypeptide: Ferredoxin--NADP reductase (359 aa).

Positions 48, 56, 61, 101, 139, 304, and 345 each coordinate FAD.

This sequence belongs to the ferredoxin--NADP reductase type 2 family. In terms of assembly, homodimer. It depends on FAD as a cofactor.

It carries out the reaction 2 reduced [2Fe-2S]-[ferredoxin] + NADP(+) + H(+) = 2 oxidized [2Fe-2S]-[ferredoxin] + NADPH. The protein is Ferredoxin--NADP reductase of Ralstonia pickettii (strain 12J).